The sequence spans 156 residues: Oxidized purine nucleoside triphosphate hydrolase (156 aa).

The region spanning 3 to 132 (TSRLYTLVLV…WFPLLLQKKK (130 aa)) is the Nudix hydrolase domain. Thr8 provides a ligand contact to 2-oxo-dATP. Lys23 contributes to the 8-oxo-dGTP binding site. 2-oxo-dATP-binding positions include Asn33 and 35–38 (FGGK). Mg(2+)-binding residues include Gly36, Glu52, Glu55, Glu56, and Glu100. A Nudix box motif is present at residues 37–58 (GKVQEGETIEDGAKRELREESG). Residue 117–120 (WPDD) participates in 2-oxo-dATP binding.

Belongs to the Nudix hydrolase family. Monomer. Mg(2+) is required as a cofactor.

The protein localises to the cytoplasm. The protein resides in the nucleus. It localises to the nucleus membrane. It is found in the cytoplasmic vesicle. Its subcellular location is the secretory vesicle. The protein localises to the acrosome. It catalyses the reaction 2-oxo-dATP + H2O = 2-oxo-dAMP + diphosphate + H(+). The catalysed reaction is 2-oxo-ATP + H2O = 2-oxo-AMP + diphosphate + H(+). It carries out the reaction 8-oxo-dGTP + H2O = 8-oxo-dGMP + diphosphate + H(+). The enzyme catalyses 8-oxo-dATP + H2O = 8-oxo-dAMP + diphosphate + H(+). It catalyses the reaction O(6)-methyl-dGTP + H2O = O(6)-methyl-dGMP + diphosphate + H(+). The catalysed reaction is N(6)-methyl-dATP + H2O = N(6)-methyl-dAMP + diphosphate + H(+). It carries out the reaction N(6)-methyl-ATP + H2O = N(6)-methyl-AMP + diphosphate + H(+). Its function is as follows. Oxidized purine nucleoside triphosphate hydrolase which is a prominent sanitizer of the oxidized nucleotide pool. Catalyzes the hydrolysis of 2-oxo-dATP (2-hydroxy-dATP) into 2-oxo-dAMP. Also has a significant hydrolase activity toward 2-oxo-ATP, 8-oxo-dGTP and 8-oxo-dATP. Through the hydrolysis of oxidized purine nucleoside triphosphates, prevents their incorporation into DNA and the subsequent transversions A:T to C:G and G:C to T:A. Also catalyzes the hydrolysis of methylated purine nucleoside triphosphate preventing their integration into DNA. Through this antimutagenic activity protects cells from oxidative stress. The protein is Oxidized purine nucleoside triphosphate hydrolase (NUDT1) of Canis lupus familiaris (Dog).